We begin with the raw amino-acid sequence, 324 residues long: Viral cathepsin (324 aa).

The signal sequence occupies residues 1 to 16 (MNKIVLYLLVYGAVQC). Positions 17 to 113 (AAYDVLKAPN…VVLDRPPDKG (97 aa)) are cleaved as a propeptide — activation peptide. Disulfide bonds link Cys134–Cys175, Cys168–Cys208, and Cys263–Cys311. Cys137 is a catalytic residue. The N-linked (GlcNAc...) asparagine; by host glycan is linked to Asn159. Active-site residues include His270 and Asn290.

Belongs to the peptidase C1 family. In terms of processing, synthesized as an inactive proenzyme and activated by proteolytic removal of the inhibitory propeptide.

The enzyme catalyses Endopeptidase of broad specificity, hydrolyzing substrates of both cathepsin L and cathepsin B.. Its function is as follows. Cysteine protease that plays an essential role in host liquefaction to facilitate horizontal transmission of the virus. May participate in the degradation of foreign protein expressed by the baculovirus system. The protein is Viral cathepsin (Vcath) of Choristoneura fumiferana nuclear polyhedrosis virus (CfMNPV).